The chain runs to 390 residues: Elongation factor Tu 2 (390 aa).

The tr-type G domain occupies 10-201; sequence KPHVNVGTIG…LDEYVAVPPR (192 aa). The tract at residues 19-26 is G1; it reads GHVDHGKT. A GTP-binding site is contributed by 19-26; that stretch reads GHVDHGKT. Threonine 26 is a binding site for Mg(2+). Positions 55–59 are G2; sequence GITIA. Positions 76 to 79 are G3; sequence DCPG. Residues 76–80 and 131–134 each bind GTP; these read DCPGH and NKAD. The G4 stretch occupies residues 131–134; sequence NKAD. The G5 stretch occupies residues 168–170; it reads SAL.

This sequence belongs to the TRAFAC class translation factor GTPase superfamily. Classic translation factor GTPase family. EF-Tu/EF-1A subfamily. As to quaternary structure, monomer.

The protein localises to the cytoplasm. It carries out the reaction GTP + H2O = GDP + phosphate + H(+). GTP hydrolase that promotes the GTP-dependent binding of aminoacyl-tRNA to the A-site of ribosomes during protein biosynthesis. This chain is Elongation factor Tu 2, found in Wolbachia pipientis wMel.